Consider the following 98-residue polypeptide: uncharacterized protein (98 aa).

It belongs to the HesB/IscA family.

This is an uncharacterized protein from Staphylococcus epidermidis (strain ATCC 35984 / DSM 28319 / BCRC 17069 / CCUG 31568 / BM 3577 / RP62A).